We begin with the raw amino-acid sequence, 198 residues long: Ribonuclease HII (198 aa).

The region spanning 11-198 is the RNase H type-2 domain; the sequence is NLIAGVDEVG…GPVKRVLGLV (188 aa). Asp-17, Glu-18, and Asp-109 together coordinate a divalent metal cation.

Belongs to the RNase HII family. Mn(2+) is required as a cofactor. The cofactor is Mg(2+).

It is found in the cytoplasm. The catalysed reaction is Endonucleolytic cleavage to 5'-phosphomonoester.. Endonuclease that specifically degrades the RNA of RNA-DNA hybrids. In Yersinia pseudotuberculosis serotype O:3 (strain YPIII), this protein is Ribonuclease HII.